Reading from the N-terminus, the 305-residue chain is MSKKLTFQEIILTLQQYWNDQGCMLMQAYDNEKGAGTMSPYTFLRAIGPEPWNAAYVEPSRRPADGRYGENPNRLYQHHQFQVVMKPSPSNIQELYLASLEKLGINPLEHDIRFVEDNWENPSTGSAGLGWEVWLDGMEITQFTYFQQVGGLATSPVTAEVTYGLERLASYIQEVDSVYDIEWAPGVKYGEIFLQPEYEHSKYSFEMSDQDMLLENFEKFEKEASRALEEGLVHPAYDYVLKCSHTFNLLDARGAVSVTERAGYIARIRNLARVVAKTFVAERKKLGFPLLDEATRAILLAEDGE.

Belongs to the class-II aminoacyl-tRNA synthetase family. In terms of assembly, tetramer of two alpha and two beta subunits.

Its subcellular location is the cytoplasm. The catalysed reaction is tRNA(Gly) + glycine + ATP = glycyl-tRNA(Gly) + AMP + diphosphate. This is Glycine--tRNA ligase alpha subunit from Streptococcus pyogenes serotype M49 (strain NZ131).